The chain runs to 263 residues: uncharacterized protein (263 aa).

A WD repeat occupies 53 to 89 (SAVTASKFSPDGRWLVNLTDQGYVQLWDVHKGERVKT).

This is an uncharacterized protein from Deinococcus radiodurans (strain ATCC 13939 / DSM 20539 / JCM 16871 / CCUG 27074 / LMG 4051 / NBRC 15346 / NCIMB 9279 / VKM B-1422 / R1).